Here is a 454-residue protein sequence, read N- to C-terminus: CCA-adding enzyme (454 aa).

ATP-binding residues include Ser51 and Lys54. CTP-binding residues include Ser51 and Lys54. 3 residues coordinate Mg(2+): Asp63, Asp65, and Asp118. Residues His141, Lys161, and Tyr170 each coordinate ATP. Residues His141, Lys161, and Tyr170 each coordinate CTP.

Belongs to the tRNA nucleotidyltransferase/poly(A) polymerase family. Archaeal CCA-adding enzyme subfamily. Homodimer. Mg(2+) serves as cofactor.

The catalysed reaction is a tRNA precursor + 2 CTP + ATP = a tRNA with a 3' CCA end + 3 diphosphate. It carries out the reaction a tRNA with a 3' CCA end + 2 CTP + ATP = a tRNA with a 3' CCACCA end + 3 diphosphate. Functionally, catalyzes the addition and repair of the essential 3'-terminal CCA sequence in tRNAs without using a nucleic acid template. Adds these three nucleotides in the order of C, C, and A to the tRNA nucleotide-73, using CTP and ATP as substrates and producing inorganic pyrophosphate. tRNA 3'-terminal CCA addition is required both for tRNA processing and repair. Also involved in tRNA surveillance by mediating tandem CCA addition to generate a CCACCA at the 3' terminus of unstable tRNAs. While stable tRNAs receive only 3'-terminal CCA, unstable tRNAs are marked with CCACCA and rapidly degraded. The protein is CCA-adding enzyme of Methanothermobacter thermautotrophicus (strain ATCC 29096 / DSM 1053 / JCM 10044 / NBRC 100330 / Delta H) (Methanobacterium thermoautotrophicum).